A 590-amino-acid chain; its full sequence is Nuclear receptor subfamily 2 group C member 1 (590 aa).

Residues 1–166 form a required for interaction with KAT2B region; it reads MATIEEIAHQ…RLQRCIAFGM (166 aa). Residues 98–173 constitute a DNA-binding region (nuclear receptor); the sequence is FDLCVVCGDK…FGMKQDSVQC (76 aa). 2 NR C4-type zinc fingers span residues 101–121 and 137–156; these read CVVCGDKASGRHYGAITCEGC and CRGSKDCVINKHHRNRCQYC. 2 positions are modified to phosphoserine: S185 and S203. A Phosphothreonine modification is found at T208. The residue at position 210 (T210) is a Phosphothreonine; by MAPK1. K238 participates in a covalent cross-link: Glycyl lysine isopeptide (Lys-Gly) (interchain with G-Cter in SUMO); alternate. K238 is covalently cross-linked (Glycyl lysine isopeptide (Lys-Gly) (interchain with G-Cter in SUMO2); alternate). The 245-residue stretch at 333–577 folds into the NR LBD domain; the sequence is EGMEGSPHLI…SVIPHILKME (245 aa). 2 positions are modified to phosphoserine; by PKC: S461 and S568. The segment at 571–590 is required for interaction with NRIP1; that stretch reads PHILKMEPADYNSQIIGHSL. K575 is covalently cross-linked (Glycyl lysine isopeptide (Lys-Gly) (interchain with G-Cter in SUMO2)).

It belongs to the nuclear hormone receptor family. NR2 subfamily. In terms of assembly, homodimer. Heterodimer; with NR2C2 which is required for chromatin remodeling and for binding to promoter regions such as globin DR1 repeats. Interacts with ESR1; the interaction prevents homodimerization of ESR1 and suppresses its transcriptional activity and cell growth. Interacts with NRIP1 (via its LXXLL motifs); the interaction provides corepressor activity. Interacts with HDAC3 (via the DNA-binding domain); the interaction recruits phosphorylated NR2C1 to PML bodies for sumoylation. Interacts with HDAC4 (via the DNA-binding domain). Interacts with PIAS1; the interaction is required for sumoylation of NR2C1. Interacts with UBE2I; the interaction is required for sumoylation of NR2C1. Interacts with KAT2B; the interaction acts as a corepressor of gene expression. In terms of processing, sumoylation requires both PIAS1 and UBE2I. Sumoylation appears to dissociate NR2C1 from the PML nuclear bodies. Enhances the interaction with NRIP1 but inhibits interaction with KAT2B. In proliferating cells, stimulation by all-trans retinoic acid, activation of MAPK1-mediated phosphorylation and recruitment to PML bodies with subsequent sumoylation, suppresses OCT4 expression. Post-translationally, phosphorylated on several serine and threonine residues. Phosphorylation on Thr-210, stimulated by all-trans retinoic acid (atRA) mediates PML location and sumoylation in proliferating cells which then modulates its association with effector molecules, KAT2B and NRIP1. Phosphorylation on Ser-568 by PKC is important for protein stability and function as activator of RARB. As to expression, isoform 1 is highly expressed in the adlumenal compartment of the seminiferous tubule of adult testes (at protein level) and in the eyes of newborn animals. Weakly expressed in other adult organs including the seminal vesicle, prostate, ovary, adrenal gland, heart, thymus, placenta and brain. Expressed during embryonic stages in developing eyes, brain and cartilage primordia (at protein level). Also expressed in the developing spinal motor neurons and in the sympathetic-, parasympathetic- and sensory ganglia of the embryonic PNS. Expressed in the developing neural epithelia of the inner ear, nasal cavity, tongue and retina. At day 16.5, expressed in various tissues including kidney and intestine. In contrast, isoform 2 is widely expressed at a low level throughout the adult testis.

The protein localises to the nucleus. The protein resides in the PML body. Functionally, orphan nuclear receptor. Binds the IR7 element in the promoter of its own gene in an autoregulatory negative feedback mechanism. Primarily repressor of a broad range of genes including ESR1 and RARB. Together with NR2C2, forms the core of the DRED (direct repeat erythroid-definitive) complex that represses embryonic and fetal globin transcription. Binds to hormone response elements (HREs) consisting of two 5'-AGGTCA-3' half site direct repeat consensus sequences. Also activator of OCT4 gene expression. Plays a fundamental role in early embryogenesis and regulates embryonic stem cell proliferation and differentiation. Mediator of retinoic acid-regulated preadipocyte proliferation. This Mus musculus (Mouse) protein is Nuclear receptor subfamily 2 group C member 1.